Reading from the N-terminus, the 427-residue chain is Enolase (427 aa).

(2R)-2-phosphoglycerate is bound at residue Q162. The active-site Proton donor is the E204. 3 residues coordinate Mg(2+): D241, E282, and D309. 4 residues coordinate (2R)-2-phosphoglycerate: K334, R363, S364, and K385. Residue K334 is the Proton acceptor of the active site.

It belongs to the enolase family. Mg(2+) is required as a cofactor.

The protein resides in the cytoplasm. It is found in the secreted. It localises to the cell surface. It catalyses the reaction (2R)-2-phosphoglycerate = phosphoenolpyruvate + H2O. The protein operates within carbohydrate degradation; glycolysis; pyruvate from D-glyceraldehyde 3-phosphate: step 4/5. Functionally, catalyzes the reversible conversion of 2-phosphoglycerate (2-PG) into phosphoenolpyruvate (PEP). It is essential for the degradation of carbohydrates via glycolysis. This chain is Enolase, found in Parafrankia sp. (strain EAN1pec).